The primary structure comprises 373 residues: Galactoside alpha-(1,2)-fucosyltransferase 1 (373 aa).

Over 1 to 12 (MWPPSRRQLCLA) the chain is Cytoplasmic. The chain crosses the membrane as a helical; Signal-anchor for type II membrane protein span at residues 13 to 29 (FLLVCALSAFSFLLHLH). The Lumenal segment spans residues 30-373 (QDLFRNGLAL…GSWRPWRFLG (344 aa)). N-linked (GlcNAc...) asparagine glycans are attached at residues Asn-66, Asn-301, and Asn-327.

Belongs to the glycosyltransferase 11 family. In terms of tissue distribution, brain.

The protein localises to the golgi apparatus. Its subcellular location is the golgi stack membrane. It catalyses the reaction a beta-D-galactosyl-(1-&gt;4)-N-acetyl-beta-D-glucosaminyl derivative + GDP-beta-L-fucose = an alpha-L-Fuc-(1-&gt;2)-beta-D-Gal-(1-&gt;4)-beta-D-GlcNAc derivative + GDP + H(+). It carries out the reaction a ganglioside GA1 + GDP-beta-L-fucose = a ganglioside Fuc-GA1 + GDP + H(+). The catalysed reaction is a beta-D-Gal-(1-&gt;3)-beta-D-GlcNAc-(1-&gt;3)-beta-D-Gal-(1-&gt;4)-beta-D-Glc-(1&lt;-&gt;1')-Cer(d18:1(4E)) + GDP-beta-L-fucose = alpha-L-fucosyl-(1-&gt;2)- beta-D-galactosyl-(1-&gt;3)-N-acetyl-beta-D-glucosaminyl-(1-&gt;3)-beta-D-galactosyl-(1-&gt;4)-beta-D-glucosyl-(1&lt;-&gt;1')-N-acylsphing-4-enine + GDP + H(+). The enzyme catalyses a neolactoside nLc4Cer(d18:1(4E)) + GDP-beta-L-fucose = a neolactoside IV(2)-alpha-Fuc-nLc4Cer(d18:1(4E)) + GDP + H(+). It catalyses the reaction a ganglioside GM1 + GDP-beta-L-fucose = a ganglioside Fuc-GM1 + GDP + H(+). It carries out the reaction beta-D-galactosyl-(1-&gt;3)-N-acetyl-D-galactosamine + GDP-beta-L-fucose = alpha-L-fucosyl-(1-&gt;2)-beta-D-galactosyl-(1-&gt;3)-N-acetyl-D-galactosamine + GDP + H(+). The protein operates within protein modification; protein glycosylation. Its function is as follows. Catalyzes the transfer of L-fucose, from a guanosine diphosphate-beta-L-fucose, to the terminal galactose residue of glycoconjugates through an alpha(1,2) linkage leading to H antigen synthesis that is an intermediate substrate in the synthesis of ABO blood group antigens. H antigen is essential for maturation of the glomerular layer of the main olfactory bulb, in cell migration and early cell-cell contacts during tumor associated angiogenesis. Preferentially fucosylates soluble lactose and to a lesser extent fucosylates glycolipids gangliosides GA1 and GM1a. This Oryctolagus cuniculus (Rabbit) protein is Galactoside alpha-(1,2)-fucosyltransferase 1.